A 225-amino-acid chain; its full sequence is NAD(P)H-quinone oxidoreductase subunit K, chloroplastic (225 aa).

Positions 43, 44, 108, and 139 each coordinate [4Fe-4S] cluster.

It belongs to the complex I 20 kDa subunit family. NDH is composed of at least 16 different subunits, 5 of which are encoded in the nucleus. [4Fe-4S] cluster is required as a cofactor.

The protein localises to the plastid. It is found in the chloroplast thylakoid membrane. The catalysed reaction is a plastoquinone + NADH + (n+1) H(+)(in) = a plastoquinol + NAD(+) + n H(+)(out). The enzyme catalyses a plastoquinone + NADPH + (n+1) H(+)(in) = a plastoquinol + NADP(+) + n H(+)(out). Functionally, NDH shuttles electrons from NAD(P)H:plastoquinone, via FMN and iron-sulfur (Fe-S) centers, to quinones in the photosynthetic chain and possibly in a chloroplast respiratory chain. The immediate electron acceptor for the enzyme in this species is believed to be plastoquinone. Couples the redox reaction to proton translocation, and thus conserves the redox energy in a proton gradient. In Nicotiana tabacum (Common tobacco), this protein is NAD(P)H-quinone oxidoreductase subunit K, chloroplastic.